The primary structure comprises 197 residues: Small ribosomal subunit protein uS7 (197 aa).

Belongs to the universal ribosomal protein uS7 family.

This Cicer arietinum (Chickpea) protein is Small ribosomal subunit protein uS7 (RPS5).